Consider the following 385-residue polypeptide: Outer membrane porin protein BP0840 (385 aa).

A signal peptide spans 1-20 (MKKTLLAAALLAGFAGAAQA).

To bacterial outer membrane proteins and porins. As to quaternary structure, homotrimer.

It is found in the cell outer membrane. In terms of biological role, forms anion selective channels. This is Outer membrane porin protein BP0840 from Bordetella pertussis (strain Tohama I / ATCC BAA-589 / NCTC 13251).